Reading from the N-terminus, the 422-residue chain is PHAF1 protein T01G9.2 (422 aa).

It belongs to the PHAF1 family.

It is found in the cytoplasm. The protein resides in the preautophagosomal structure. In terms of biological role, may play a regulatory role in autophagic activity. The sequence is that of PHAF1 protein T01G9.2 from Caenorhabditis elegans.